Reading from the N-terminus, the 270-residue chain is Protein FAM110D (270 aa).

Residues 1 to 16 (MLLASPSTPSRGRTPS) are compositionally biased toward low complexity. Disordered stretches follow at residues 1 to 83 (MLLA…RPDS), 117 to 142 (RDVA…PQDA), and 186 to 244 (PQSW…QVSV). The span at 68-78 (RPARRGSGRRL) shows a compositional bias: basic residues.

It belongs to the FAM110 family.

This Bos taurus (Bovine) protein is Protein FAM110D (FAM110D).